A 187-amino-acid polypeptide reads, in one-letter code: Hypoxanthine/guanine phosphoribosyltransferase (187 aa).

This sequence belongs to the purine/pyrimidine phosphoribosyltransferase family. Archaeal HPRT subfamily. As to quaternary structure, homodimer.

It is found in the cytoplasm. It carries out the reaction IMP + diphosphate = hypoxanthine + 5-phospho-alpha-D-ribose 1-diphosphate. The catalysed reaction is GMP + diphosphate = guanine + 5-phospho-alpha-D-ribose 1-diphosphate. Its pathway is purine metabolism; IMP biosynthesis via salvage pathway; IMP from hypoxanthine: step 1/1. Its function is as follows. Catalyzes a salvage reaction resulting in the formation of IMP that is energically less costly than de novo synthesis. The sequence is that of Hypoxanthine/guanine phosphoribosyltransferase from Methanopyrus kandleri (strain AV19 / DSM 6324 / JCM 9639 / NBRC 100938).